Consider the following 48-residue polypeptide: Omega-agatoxin-Aa5a (48 aa).

4 cysteine pairs are disulfide-bonded: cysteine 3–cysteine 16, cysteine 10–cysteine 21, cysteine 15–cysteine 32, and cysteine 23–cysteine 30.

Belongs to the neurotoxin 02 (plectoxin) family. In terms of tissue distribution, expressed by the venom gland.

It is found in the secreted. In terms of biological role, the toxin blocks voltage-gated calcium channels in rat cerebellar granule cells (IC(50)=200 nM). The sequence is that of Omega-agatoxin-Aa5a from Agelenopsis aperta (North American funnel-web spider).